We begin with the raw amino-acid sequence, 462 residues long: Bifunctional enzyme LpxC/FabZ (462 aa).

Residues 1-302 (MQKQQTLKDK…MARLIRKEIK (302 aa)) are UDP-3-O-acyl-N-acetylglucosamine deacetylase. Zn(2+) contacts are provided by histidine 78, histidine 260, and aspartate 264. Histidine 287 acts as the Proton donor in catalysis. Positions 303 to 462 (QNEAQAPVYN…FMAQIIQNKE (160 aa)) are 3-hydroxyacyl-[acyl-carrier-protein] dehydratase. Histidine 364 is an active-site residue.

This sequence in the N-terminal section; belongs to the LpxC family. It in the C-terminal section; belongs to the thioester dehydratase family. Zn(2+) serves as cofactor.

It is found in the cytoplasm. The catalysed reaction is a UDP-3-O-[(3R)-3-hydroxyacyl]-N-acetyl-alpha-D-glucosamine + H2O = a UDP-3-O-[(3R)-3-hydroxyacyl]-alpha-D-glucosamine + acetate. It catalyses the reaction a (3R)-hydroxyacyl-[ACP] = a (2E)-enoyl-[ACP] + H2O. Its pathway is glycolipid biosynthesis; lipid IV(A) biosynthesis; lipid IV(A) from (3R)-3-hydroxytetradecanoyl-[acyl-carrier-protein] and UDP-N-acetyl-alpha-D-glucosamine: step 2/6. In terms of biological role, catalyzes the hydrolysis of UDP-3-O-myristoyl-N-acetylglucosamine to form UDP-3-O-myristoylglucosamine and acetate, the committed step in lipid A biosynthesis. Involved in unsaturated fatty acids biosynthesis. Catalyzes the dehydration of short chain beta-hydroxyacyl-ACPs and long chain saturated and unsaturated beta-hydroxyacyl-ACPs. This Porphyromonas gingivalis (strain ATCC BAA-308 / W83) protein is Bifunctional enzyme LpxC/FabZ (lpxC/fabZ).